Reading from the N-terminus, the 90-residue chain is MAEQRLPPKIQYLKLKRTEELNNKLKKELARERITASNACLSIIDYTSTNKDYAVPEVWGYMKPGENHFRASAKQARPRGGHEGSCCCIM.

Cys86 carries S-palmitoyl cysteine lipidation. At Cys87 the chain carries Cysteine methyl ester. The S-farnesyl cysteine moiety is linked to residue Cys87. Positions 88 to 90 (CIM) are cleaved as a propeptide — removed in mature form.

This sequence belongs to the G protein gamma family. As to quaternary structure, g proteins are composed of 3 units, alpha, beta and gamma.

Its subcellular location is the membrane. This Eremothecium gossypii (strain ATCC 10895 / CBS 109.51 / FGSC 9923 / NRRL Y-1056) (Yeast) protein is Guanine nucleotide-binding protein subunit gamma.